The following is a 238-amino-acid chain: Accessory gene regulator A (238 aa).

The Response regulatory domain maps to 2 to 125 (KIFICEDDPK…LRTRIIDCLE (124 aa)). Residue Asp-59 is modified to 4-aspartylphosphate. Positions 143–238 (IELKRGSNSV…YASVRNVKKK (96 aa)) constitute an HTH LytTR-type domain.

It localises to the cytoplasm. In terms of biological role, required for high-level post-exponential phase expression of a series of secreted proteins. This is Accessory gene regulator A (agrA) from Staphylococcus aureus (strain Mu50 / ATCC 700699).